The primary structure comprises 207 residues: Probable HTH-type transcriptional regulator YttP (207 aa).

The HTH tetR-type domain maps to 3–63 (VSTKDKIIES…HLVSEFYEGY (61 aa)). Residues 26–45 (SVREIAKSADVNVAHISYYF) constitute a DNA-binding region (H-T-H motif).

This chain is Probable HTH-type transcriptional regulator YttP (yttP), found in Bacillus subtilis (strain 168).